Here is a 316-residue protein sequence, read N- to C-terminus: WSCD family member GA21586 (316 aa).

A helical membrane pass occupies residues Phe8–Asn28. 4 N-linked (GlcNAc...) asparagine glycosylation sites follow: Asn78, Asn150, Asn226, and Asn232.

Belongs to the WSCD family.

The protein resides in the membrane. The chain is WSCD family member GA21586 from Drosophila pseudoobscura pseudoobscura (Fruit fly).